We begin with the raw amino-acid sequence, 210 residues long: Probable nicotinate-nucleotide adenylyltransferase (210 aa).

This sequence belongs to the NadD family.

It carries out the reaction nicotinate beta-D-ribonucleotide + ATP + H(+) = deamido-NAD(+) + diphosphate. Its pathway is cofactor biosynthesis; NAD(+) biosynthesis; deamido-NAD(+) from nicotinate D-ribonucleotide: step 1/1. In terms of biological role, catalyzes the reversible adenylation of nicotinate mononucleotide (NaMN) to nicotinic acid adenine dinucleotide (NaAD). This Streptococcus pyogenes serotype M18 (strain MGAS8232) protein is Probable nicotinate-nucleotide adenylyltransferase.